Consider the following 97-residue polypeptide: Co-chaperonin GroES (97 aa).

This sequence belongs to the GroES chaperonin family. In terms of assembly, heptamer of 7 subunits arranged in a ring. Interacts with the chaperonin GroEL.

Its subcellular location is the cytoplasm. In terms of biological role, together with the chaperonin GroEL, plays an essential role in assisting protein folding. The GroEL-GroES system forms a nano-cage that allows encapsulation of the non-native substrate proteins and provides a physical environment optimized to promote and accelerate protein folding. GroES binds to the apical surface of the GroEL ring, thereby capping the opening of the GroEL channel. This chain is Co-chaperonin GroES, found in Klebsiella aerogenes (Enterobacter aerogenes).